The following is a 380-amino-acid chain: N-acetylcysteine deacetylase (380 aa).

Residues C98, H100, E134, H158, and H350 each contribute to the Ni(2+) site.

Belongs to the peptidase M20 family. The cofactor is a divalent metal cation.

The catalysed reaction is N-acetyl-L-cysteine + H2O = L-cysteine + acetate. It participates in amino-acid biosynthesis; L-cysteine biosynthesis. Probably catalyzes the deacetylation of N-acetylcysteine (NAC) to acetate and cysteine. Is involved in a S-(2-succino)cysteine (2SC) degradation pathway that allows B.subtilis to grow on 2SC as a sole sulfur source, via its metabolization to cysteine. This chain is N-acetylcysteine deacetylase, found in Bacillus subtilis (strain 168).